The following is a 208-amino-acid chain: Small ribosomal subunit protein uS4 (208 aa).

Residues 95 to 157 (RRIDNVVYRA…DSLKKLIRSN (63 aa)) form the S4 RNA-binding domain.

The protein belongs to the universal ribosomal protein uS4 family. In terms of assembly, part of the 30S ribosomal subunit. Contacts protein S5. The interaction surface between S4 and S5 is involved in control of translational fidelity.

One of the primary rRNA binding proteins, it binds directly to 16S rRNA where it nucleates assembly of the body of the 30S subunit. In terms of biological role, with S5 and S12 plays an important role in translational accuracy. This chain is Small ribosomal subunit protein uS4, found in Borreliella burgdorferi (strain ATCC 35210 / DSM 4680 / CIP 102532 / B31) (Borrelia burgdorferi).